The primary structure comprises 376 residues: Protein-arginine rhamnosyltransferase (376 aa).

DTDP-beta-L-rhamnose contacts are provided by residues 13-16 (NYGD), Tyr-192, 252-254 (MAQ), and 270-274 (RGEDS). 14–15 (YG) contacts dTDP. Asp-16 serves as the catalytic Proton acceptor. DTDP contacts are provided by residues Tyr-192, 252–254 (MAQ), and 270–274 (RGEDS). Residue Glu-272 is part of the active site.

It belongs to the glycosyltransferase 104 family.

The catalysed reaction is dTDP-beta-L-rhamnose + L-arginyl-[protein] = N(omega)-(alpha-L-rhamnosyl)-L-arginyl-[protein] + dTDP + H(+). Protein-arginine rhamnosyltransferase that catalyzes the transfer of a single rhamnose to elongation factor P (EF-P) on 'Lys-32', a modification required for EF-P-dependent rescue of polyproline stalled ribosomes. In Pseudomonas aeruginosa (strain ATCC 15692 / DSM 22644 / CIP 104116 / JCM 14847 / LMG 12228 / 1C / PRS 101 / PAO1), this protein is Protein-arginine rhamnosyltransferase.